Consider the following 359-residue polypeptide: Peptide chain release factor 1 (359 aa).

Residue Gln-236 is modified to N5-methylglutamine.

Belongs to the prokaryotic/mitochondrial release factor family. Methylated by PrmC. Methylation increases the termination efficiency of RF1.

The protein localises to the cytoplasm. In terms of biological role, peptide chain release factor 1 directs the termination of translation in response to the peptide chain termination codons UAG and UAA. This Streptococcus agalactiae serotype V (strain ATCC BAA-611 / 2603 V/R) protein is Peptide chain release factor 1.